The chain runs to 284 residues: MKRLPAVAGSFYESDPKKLKMQIEWSFRHNIGPRDIPKQTYEKKKRDNLFFVVPHAGYIYSGPVAAHSYYYLVSEGRPDVVIILGPNHTGLGSYVSAWPKGEWETPLGSVKIDEEILMQLVKESEVIDLDEKSHLYEHSIEVQLPFLQYFFDDDFKIVPIVIMMQTPEIAEFLADAIYNVMQKNPDKDIVVLASSDMNHYDPHEITVKKDVEAIEKIQQLDYKGLYEVVEGKDVTLCGYGPIMVNLILAKKFGKKAYILKHATSGDTSGPKDSVVGYLAARFGS.

It belongs to the MEMO1 family.

The sequence is that of MEMO1 family protein YN1551_0739 from Saccharolobus islandicus (strain Y.N.15.51 / Yellowstone #2) (Sulfolobus islandicus).